The sequence spans 158 residues: Glutathione peroxidase homolog BsaA (158 aa).

The active site involves cysteine 36.

This sequence belongs to the glutathione peroxidase family.

This chain is Glutathione peroxidase homolog BsaA (bsaA), found in Staphylococcus epidermidis (strain ATCC 12228 / FDA PCI 1200).